We begin with the raw amino-acid sequence, 92 residues long: Ictacalcin (92 aa).

EF-hand domains follow at residues 12–47 and 49–84; these read ISTFHKYSGKEGDKCTLTKGELKDLLTKELGGAFGN and SDQATLDKIFKDLDTNADGVVDFQEYATMVACTTML. Residues Thr-27, Glu-32, Asp-62, Asn-64, Asp-66, and Glu-73 each contribute to the Ca(2+) site.

The protein belongs to the S-100 family. Abundant in epithelial cells of olfactory rosette, barbel, skin and gill but not brain or muscle.

Its function is as follows. Plays an important role in catfish calcium homeostasis. This is Ictacalcin from Ictalurus punctatus (Channel catfish).